The chain runs to 241 residues: DNA repair protein RecO (241 aa).

This sequence belongs to the RecO family.

Its function is as follows. Involved in DNA repair and RecF pathway recombination. The protein is DNA repair protein RecO of Orientia tsutsugamushi (strain Ikeda) (Rickettsia tsutsugamushi).